The chain runs to 150 residues: MNIEVEMKVLDERMADVVPVYATKGSAGLDLRACLDEEVVLQPGETFLVPTGLAIYLADPSYAAVLLPRSGLGHKHGIVLGNLVGLIDSDYQGELKVSLWNRSSEPFTVKPFERIAQMVIVPIVQARFKRVEEFVGSSRGEGGFGSTGLH.

Residues 69–71 (RSG), Asn82, 86–88 (LID), and Lys96 each bind substrate.

The protein belongs to the dUTPase family. It depends on Mg(2+) as a cofactor.

It carries out the reaction dUTP + H2O = dUMP + diphosphate + H(+). It functions in the pathway pyrimidine metabolism; dUMP biosynthesis; dUMP from dCTP (dUTP route): step 2/2. Its function is as follows. This enzyme is involved in nucleotide metabolism: it produces dUMP, the immediate precursor of thymidine nucleotides and it decreases the intracellular concentration of dUTP so that uracil cannot be incorporated into DNA. The sequence is that of Deoxyuridine 5'-triphosphate nucleotidohydrolase from Neisseria meningitidis serogroup A / serotype 4A (strain DSM 15465 / Z2491).